Consider the following 388-residue polypeptide: Probable serine/threonine-protein kinase PBL20 (388 aa).

A lipid anchor (S-palmitoyl cysteine) is attached at C3. The region spanning 91–372 (FSRKLKIGEG…FVVESLTNII (282 aa)) is the Protein kinase domain. ATP contacts are provided by residues 97-105 (IGEGGFGSV) and K128. D221 functions as the Proton acceptor in the catalytic mechanism.

Belongs to the protein kinase superfamily. Ser/Thr protein kinase family.

It is found in the cell membrane. It catalyses the reaction L-seryl-[protein] + ATP = O-phospho-L-seryl-[protein] + ADP + H(+). The enzyme catalyses L-threonyl-[protein] + ATP = O-phospho-L-threonyl-[protein] + ADP + H(+). May be involved in plant defense signaling. This is Probable serine/threonine-protein kinase PBL20 from Arabidopsis thaliana (Mouse-ear cress).